The sequence spans 171 residues: T-cell surface glycoprotein CD3 delta chain (171 aa).

The signal sequence occupies residues 1–21 (MEHSRFLSGLILAAFLSRVSP). At 22–104 (YEVEMEELED…NCVELDSATL (83 aa)) the chain is on the extracellular side. An intrachain disulfide couples C37 to C72. N38 carries N-linked (GlcNAc...) asparagine glycosylation. Residues 105–125 (AGIIVTDIIATLLLALGVYCF) form a helical membrane-spanning segment. Topologically, residues 126 to 171 (AGHEMGRFSRAADTQDLLRNDQLYQPLRDRNDGQYSRLGENWARNK) are cytoplasmic. In terms of domain architecture, ITAM spans 138 to 166 (DTQDLLRNDQLYQPLRDRNDGQYSRLGEN). 2 positions are modified to phosphotyrosine: Y149 and Y160.

In terms of assembly, the TCR-CD3 complex is composed of a CD3D/CD3E and a CD3G/CD3E heterodimers that preferentially associate with TCRalpha and TCRbeta, respectively, to form TCRalpha/CD3E/CD3G and TCRbeta/CD3G/CD3E trimers. In turn, the hexamer interacts with CD3Z homodimer to form the TCR-CD3 complex. Alternatively, TCRalpha and TCRbeta can be replaced by TCRgamma and TCRdelta. Interacts with coreceptors CD4 and CD8. Phosphorylated on Tyr residues after T-cell receptor triggering by LCK in association with CD4/CD8. CD3D is mostly present on T-lymphocytes with its TCR-CD3 partners. Present also in fetal NK-cells.

Its subcellular location is the cell membrane. Part of the TCR-CD3 complex present on T-lymphocyte cell surface that plays an essential role in adaptive immune response. When antigen presenting cells (APCs) activate T-cell receptor (TCR), TCR-mediated signals are transmitted across the cell membrane by the CD3 chains CD3D, CD3E, CD3G and CD3Z. All CD3 chains contain immunoreceptor tyrosine-based activation motifs (ITAMs) in their cytoplasmic domain. Upon TCR engagement, these motifs become phosphorylated by Src family protein tyrosine kinases LCK and FYN, resulting in the activation of downstream signaling pathways. In addition of this role of signal transduction in T-cell activation, CD3D plays an essential role in thymocyte differentiation. Indeed, participates in correct intracellular TCR-CD3 complex assembly and surface expression. In absence of a functional TCR-CD3 complex, thymocytes are unable to differentiate properly. Interacts with CD4 and CD8 and thus serves to establish a functional link between the TCR and coreceptors CD4 and CD8, which is needed for activation and positive selection of CD4 or CD8 T-cells. The sequence is that of T-cell surface glycoprotein CD3 delta chain (CD3D) from Sus scrofa (Pig).